The following is a 376-amino-acid chain: Probable transcription factor At1g61730 (376 aa).

The disordered stretch occupies residues 1-150 (MTKKLNPLED…RVKKDEESVK (150 aa)). The segment covering 17 to 40 (SDEDDVETSEAGEASDDSSSSEED) has biased composition (acidic residues). Position 49 is a phosphoserine (S49). Positions 49–72 (SPSATTAAAPPAKSTAVSTAADSD) are enriched in low complexity. Positions 73-83 (SGSETETDSDS) are enriched in acidic residues. A compositionally biased stretch (polar residues) spans 87–103 (NPPNSGSGKTIALNTVN).

This sequence belongs to the GeBP family. Interacts with DEK3.

The protein is Probable transcription factor At1g61730 of Arabidopsis thaliana (Mouse-ear cress).